The following is a 143-amino-acid chain: MQEIEIFCDGSSLGNPGPGGYAAILRYKDKEKTISGGENFTTNNRMELRALNEALKILKRPCHITLYSDSQYVCQAINVWLVNWQKKNFAKVKNVDLWKEFVKVSKGHSIVAVWIKGHNGHAENERCNSLAKLEAQKRVKTTT.

The RNase H type-1 domain maps to 1–136 (MQEIEIFCDG…CNSLAKLEAQ (136 aa)). 4 residues coordinate Mg(2+): aspartate 9, glutamate 47, aspartate 69, and asparagine 128.

Belongs to the RNase H family. In terms of assembly, monomer. Mg(2+) serves as cofactor.

The protein resides in the cytoplasm. It carries out the reaction Endonucleolytic cleavage to 5'-phosphomonoester.. In terms of biological role, endonuclease that specifically degrades the RNA of RNA-DNA hybrids. The sequence is that of Ribonuclease HI (rnhA) from Helicobacter pylori (strain J99 / ATCC 700824) (Campylobacter pylori J99).